The sequence spans 144 residues: uncharacterized protein (144 aa).

The helical transmembrane segment at 72-90 (VAIGTSLIVGAGVAMEVSV) threads the bilayer.

This sequence to yeast YCL21w.

The protein resides in the membrane. This is an uncharacterized protein from Saccharomyces cerevisiae (strain ATCC 204508 / S288c) (Baker's yeast).